We begin with the raw amino-acid sequence, 348 residues long: Anthranilate phosphoribosyltransferase (348 aa).

5-phospho-alpha-D-ribose 1-diphosphate is bound by residues G93, 96–97, T101, 103–106, 121–129, and S133; these read GD, NVST, and KHGNRAVSS. G93 contributes to the anthranilate binding site. A Mg(2+)-binding site is contributed by S105. Anthranilate is bound at residue N124. R179 is an anthranilate binding site. Mg(2+)-binding residues include D238 and E239.

Belongs to the anthranilate phosphoribosyltransferase family. As to quaternary structure, homodimer. Mg(2+) is required as a cofactor.

It catalyses the reaction N-(5-phospho-beta-D-ribosyl)anthranilate + diphosphate = 5-phospho-alpha-D-ribose 1-diphosphate + anthranilate. It participates in amino-acid biosynthesis; L-tryptophan biosynthesis; L-tryptophan from chorismate: step 2/5. Functionally, catalyzes the transfer of the phosphoribosyl group of 5-phosphorylribose-1-pyrophosphate (PRPP) to anthranilate to yield N-(5'-phosphoribosyl)-anthranilate (PRA). The sequence is that of Anthranilate phosphoribosyltransferase from Desulfotalea psychrophila (strain LSv54 / DSM 12343).